The following is a 156-amino-acid chain: Endogenous retrovirus group K member 10 Pro protein (156 aa).

Residues Phe-21 to Leu-96 enclose the Peptidase A2 domain. The active site involves Asp-26. Residues Tyr-111–Phe-156 form the G-patch domain.

It belongs to the peptidase A2 family. HERV class-II K(HML-2) subfamily. As to quaternary structure, active as a homodimer. Autoproteolytically processed at the N-terminus. Expected C-terminal autoprocessing not detected. The sequence shown is that of the processed Pro protein.

The catalysed reaction is Processing at the authentic HIV-1 PR recognition site and release of the mature p17 matrix and the p24 capsid protein, as a result of the cleavage of the -SQNY-|-PIVQ- cleavage site.. Its activity is regulated as follows. Resistant to a number of clinically useful HIV-1 PR inhibitors. Inhibited by cyclic urea SD146. Its function is as follows. Retroviral proteases have roles in processing of the primary translation products and the maturation of the viral particle. Endogenous Pro proteins may have kept, lost or modified their original function during evolution. This endogenous protein has retained most of the characteristics of retroviral proteases. This is Endogenous retrovirus group K member 10 Pro protein (ERVK-10) from Homo sapiens (Human).